A 545-amino-acid chain; its full sequence is CTP synthase (545 aa).

Residues 1–266 (MATNYIFVTG…DTFVCDRFRL (266 aa)) form an amidoligase domain region. A CTP-binding site is contributed by Ser14. Ser14 lines the UTP pocket. ATP-binding positions include 15–20 (SLGKGI) and Asp72. Residues Asp72 and Glu140 each contribute to the Mg(2+) site. Residues 147 to 149 (DIE), 187 to 192 (KTKPTQ), and Lys223 contribute to the CTP site. Residues 187-192 (KTKPTQ) and Lys223 each bind UTP. ATP is bound at residue 239–241 (KDV). The region spanning 291–542 (TIGMVGKYVE…VKAAKDYQDS (252 aa)) is the Glutamine amidotransferase type-1 domain. An L-glutamine-binding site is contributed by Gly352. Catalysis depends on Cys379, which acts as the Nucleophile; for glutamine hydrolysis. L-glutamine-binding positions include 380-383 (LGMQ), Glu403, and Arg470. Residues His515 and Glu517 contribute to the active site.

This sequence belongs to the CTP synthase family. As to quaternary structure, homotetramer.

It catalyses the reaction UTP + L-glutamine + ATP + H2O = CTP + L-glutamate + ADP + phosphate + 2 H(+). The catalysed reaction is L-glutamine + H2O = L-glutamate + NH4(+). It carries out the reaction UTP + NH4(+) + ATP = CTP + ADP + phosphate + 2 H(+). It functions in the pathway pyrimidine metabolism; CTP biosynthesis via de novo pathway; CTP from UDP: step 2/2. Its activity is regulated as follows. Allosterically activated by GTP, when glutamine is the substrate; GTP has no effect on the reaction when ammonia is the substrate. The allosteric effector GTP functions by stabilizing the protein conformation that binds the tetrahedral intermediate(s) formed during glutamine hydrolysis. Inhibited by the product CTP, via allosteric rather than competitive inhibition. Functionally, catalyzes the ATP-dependent amination of UTP to CTP with either L-glutamine or ammonia as the source of nitrogen. Regulates intracellular CTP levels through interactions with the four ribonucleotide triphosphates. This is CTP synthase from Actinobacillus pleuropneumoniae serotype 7 (strain AP76).